A 451-amino-acid polypeptide reads, in one-letter code: tRNA modification GTPase MnmE (451 aa).

The (6S)-5-formyl-5,6,7,8-tetrahydrofolate site is built by arginine 25, glutamate 87, and arginine 127. The TrmE-type G domain maps to 222-374 (GLRVALVGRP…FVQVLLERCG (153 aa)). Residue asparagine 232 coordinates K(+). GTP is bound by residues 232–237 (NVGKSS), 251–257 (TELPGTT), and 276–279 (DTAG). Residue serine 236 participates in Mg(2+) binding. 3 residues coordinate K(+): threonine 251, leucine 253, and threonine 256. Residue threonine 257 participates in Mg(2+) binding. A (6S)-5-formyl-5,6,7,8-tetrahydrofolate-binding site is contributed by lysine 451.

It belongs to the TRAFAC class TrmE-Era-EngA-EngB-Septin-like GTPase superfamily. TrmE GTPase family. Homodimer. Heterotetramer of two MnmE and two MnmG subunits. K(+) is required as a cofactor.

It localises to the cytoplasm. Its function is as follows. Exhibits a very high intrinsic GTPase hydrolysis rate. Involved in the addition of a carboxymethylaminomethyl (cmnm) group at the wobble position (U34) of certain tRNAs, forming tRNA-cmnm(5)s(2)U34. The chain is tRNA modification GTPase MnmE from Synechococcus sp. (strain CC9902).